The primary structure comprises 142 residues: UPF0332 protein PH1297 (142 aa).

This sequence belongs to the UPF0332 family.

The chain is UPF0332 protein PH1297 from Pyrococcus horikoshii (strain ATCC 700860 / DSM 12428 / JCM 9974 / NBRC 100139 / OT-3).